Consider the following 244-residue polypeptide: 7-cyano-7-deazaguanine synthase (244 aa).

Residue 14–24 participates in ATP binding; sequence FSGGQDSATCV. Residues cysteine 202, cysteine 217, cysteine 220, and cysteine 223 each contribute to the Zn(2+) site.

The protein belongs to the QueC family. Zn(2+) serves as cofactor.

It catalyses the reaction 7-carboxy-7-deazaguanine + NH4(+) + ATP = 7-cyano-7-deazaguanine + ADP + phosphate + H2O + H(+). It participates in purine metabolism; 7-cyano-7-deazaguanine biosynthesis. Its function is as follows. Catalyzes the ATP-dependent conversion of 7-carboxy-7-deazaguanine (CDG) to 7-cyano-7-deazaguanine (preQ(0)). This chain is 7-cyano-7-deazaguanine synthase, found in Burkholderia ambifaria (strain MC40-6).